Here is a 351-residue protein sequence, read N- to C-terminus: Cytosolic sulfotransferase 11 (351 aa).

98–103 lines the 3'-phosphoadenylyl sulfate pocket; the sequence is KGGTTW. H163 functions as the Proton acceptor in the catalytic mechanism. Residues R184, S192, Y250, and 316–318 each bind 3'-phosphoadenylyl sulfate; that span reads RKG.

It belongs to the sulfotransferase 1 family.

The protein localises to the cytoplasm. Its function is as follows. Sulfotransferase that utilizes 3'-phospho-5'-adenylyl sulfate (PAPS) as sulfonate donor. The chain is Cytosolic sulfotransferase 11 (SOT11) from Arabidopsis thaliana (Mouse-ear cress).